Consider the following 289-residue polypeptide: Small ribosomal subunit protein uS2C (289 aa).

This sequence belongs to the universal ribosomal protein uS2 family. As to quaternary structure, component of the small ribosomal subunit. Mature ribosomes consist of a small (40S) and a large (60S) subunit. The 40S subunit contains about 33 different proteins and 1 molecule of RNA (18S). The 60S subunit contains about 49 different proteins and 3 molecules of RNA (25S, 5.8S and 5S). Interacts with rps21.

The protein localises to the cytoplasm. Required for the assembly and/or stability of the 40S ribosomal subunit. Required for the processing of the 20S rRNA-precursor to mature 18S rRNA in a late step of the maturation of 40S ribosomal subunits. This chain is Small ribosomal subunit protein uS2C (rps0c), found in Schizosaccharomyces japonicus (strain yFS275 / FY16936) (Fission yeast).